A 161-amino-acid chain; its full sequence is uncharacterized protein (161 aa).

This is an uncharacterized protein from Acidianus convivator (ATV).